Here is a 324-residue protein sequence, read N- to C-terminus: Glyoxylate/hydroxypyruvate reductase B (324 aa).

Residues Arg237 and Glu266 contribute to the active site. Residue His285 is the Proton donor of the active site.

This sequence belongs to the D-isomer specific 2-hydroxyacid dehydrogenase family. GhrB subfamily. As to quaternary structure, homodimer.

Its subcellular location is the cytoplasm. The catalysed reaction is glycolate + NADP(+) = glyoxylate + NADPH + H(+). It catalyses the reaction (R)-glycerate + NAD(+) = 3-hydroxypyruvate + NADH + H(+). It carries out the reaction (R)-glycerate + NADP(+) = 3-hydroxypyruvate + NADPH + H(+). Catalyzes the NADPH-dependent reduction of glyoxylate and hydroxypyruvate into glycolate and glycerate, respectively. This Salmonella agona (strain SL483) protein is Glyoxylate/hydroxypyruvate reductase B.